Reading from the N-terminus, the 557-residue chain is 2-succinyl-5-enolpyruvyl-6-hydroxy-3-cyclohexene-1-carboxylate synthase (557 aa).

The protein belongs to the TPP enzyme family. MenD subfamily. As to quaternary structure, homodimer. Requires Mg(2+) as cofactor. Mn(2+) is required as a cofactor. Thiamine diphosphate serves as cofactor.

It catalyses the reaction isochorismate + 2-oxoglutarate + H(+) = 5-enolpyruvoyl-6-hydroxy-2-succinyl-cyclohex-3-ene-1-carboxylate + CO2. It functions in the pathway quinol/quinone metabolism; 1,4-dihydroxy-2-naphthoate biosynthesis; 1,4-dihydroxy-2-naphthoate from chorismate: step 2/7. The protein operates within quinol/quinone metabolism; menaquinone biosynthesis. Functionally, catalyzes the thiamine diphosphate-dependent decarboxylation of 2-oxoglutarate and the subsequent addition of the resulting succinic semialdehyde-thiamine pyrophosphate anion to isochorismate to yield 2-succinyl-5-enolpyruvyl-6-hydroxy-3-cyclohexene-1-carboxylate (SEPHCHC). In Staphylococcus aureus (strain bovine RF122 / ET3-1), this protein is 2-succinyl-5-enolpyruvyl-6-hydroxy-3-cyclohexene-1-carboxylate synthase.